A 300-amino-acid chain; its full sequence is N-acetylmannosamine kinase (300 aa).

ATP is bound by residues 5–12 (ALDIGGTK) and 132–139 (GVGGGIVL). Zn(2+)-binding residues include histidine 156, cysteine 166, cysteine 168, and cysteine 173.

Belongs to the ROK (NagC/XylR) family. NanK subfamily. Homodimer.

The enzyme catalyses an N-acyl-D-mannosamine + ATP = an N-acyl-D-mannosamine 6-phosphate + ADP + H(+). The protein operates within amino-sugar metabolism; N-acetylneuraminate degradation; D-fructose 6-phosphate from N-acetylneuraminate: step 2/5. Catalyzes the phosphorylation of N-acetylmannosamine (ManNAc) to ManNAc-6-P. The sequence is that of N-acetylmannosamine kinase from Haemophilus influenzae (strain PittEE).